A 214-amino-acid polypeptide reads, in one-letter code: Adenylate kinase (214 aa).

ATP is bound at residue 10-15 (GAGKGT). The segment at 30–59 (STGDMLRAAVKAGTPLGLEAKKVMDAGQLV) is NMP. Residues Thr-31, Arg-36, 57-59 (QLV), 85-88 (GFPR), and Gln-92 contribute to the AMP site. The tract at residues 122-159 (GRRVHPGSGRVYHVVFNPPKVEGKDDVTGEDLAIRPDD) is LID. Residues Arg-123 and 132-133 (VY) each bind ATP. AMP-binding residues include Arg-156 and Arg-167. Residue Gln-200 participates in ATP binding.

The protein belongs to the adenylate kinase family. In terms of assembly, monomer.

Its subcellular location is the cytoplasm. It catalyses the reaction AMP + ATP = 2 ADP. The protein operates within purine metabolism; AMP biosynthesis via salvage pathway; AMP from ADP: step 1/1. Its function is as follows. Catalyzes the reversible transfer of the terminal phosphate group between ATP and AMP. Plays an important role in cellular energy homeostasis and in adenine nucleotide metabolism. The sequence is that of Adenylate kinase from Shewanella baltica (strain OS155 / ATCC BAA-1091).